We begin with the raw amino-acid sequence, 159 residues long: MAFNLFTTFTERLRLVSWRSVFEDTRSLRRFLIRIALVATGLVSKESAIVCHVLAGKVLRMYKTSRDPCLRIIVSLPLLSIYFRPDSIAKSNRKQRPWKEKIFHPDSRKMSCHCEPLPYQTRFDRQAPLQEYSIYPKSRKRLELDPQQNSTVVVQHDKF.

It is found in the mitochondrion. This is an uncharacterized protein from Arabidopsis thaliana (Mouse-ear cress).